A 305-amino-acid chain; its full sequence is NAD kinase 2 (305 aa).

Asp-78 (proton acceptor) is an active-site residue. Residues 78–79 (DG), 152–153 (NE), Asp-182, 193–198 (TAYSLS), and Asn-251 each bind NAD(+).

The protein belongs to the NAD kinase family. Requires a divalent metal cation as cofactor.

The protein localises to the cytoplasm. The enzyme catalyses NAD(+) + ATP = ADP + NADP(+) + H(+). Functionally, involved in the regulation of the intracellular balance of NAD and NADP, and is a key enzyme in the biosynthesis of NADP. Catalyzes specifically the phosphorylation on 2'-hydroxyl of the adenosine moiety of NAD to yield NADP. Functions as a growth repressor under light-activated heterotrophic growth conditions and light and dark cycle conditions in the presence of glucose. NADP(H)/NAD(H) maintenance by slr0400 probably plays a significant role in modulating glycolysis and the TCA cycle to repress the growth rate and maintain the photosynthetic capacity. This Synechocystis sp. (strain ATCC 27184 / PCC 6803 / Kazusa) protein is NAD kinase 2.